A 282-amino-acid chain; its full sequence is Phosphatidylserine decarboxylase proenzyme (282 aa).

Active-site charge relay system; for autoendoproteolytic cleavage activity residues include Asp-88, His-145, and Ser-248. Ser-248 acts as the Schiff-base intermediate with substrate; via pyruvic acid; for decarboxylase activity in catalysis. Position 248 is a pyruvic acid (Ser); by autocatalysis (Ser-248).

The protein belongs to the phosphatidylserine decarboxylase family. PSD-B subfamily. Prokaryotic type I sub-subfamily. Heterodimer of a large membrane-associated beta subunit and a small pyruvoyl-containing alpha subunit. The cofactor is pyruvate. Is synthesized initially as an inactive proenzyme. Formation of the active enzyme involves a self-maturation process in which the active site pyruvoyl group is generated from an internal serine residue via an autocatalytic post-translational modification. Two non-identical subunits are generated from the proenzyme in this reaction, and the pyruvate is formed at the N-terminus of the alpha chain, which is derived from the carboxyl end of the proenzyme. The autoendoproteolytic cleavage occurs by a canonical serine protease mechanism, in which the side chain hydroxyl group of the serine supplies its oxygen atom to form the C-terminus of the beta chain, while the remainder of the serine residue undergoes an oxidative deamination to produce ammonia and the pyruvoyl prosthetic group on the alpha chain. During this reaction, the Ser that is part of the protease active site of the proenzyme becomes the pyruvoyl prosthetic group, which constitutes an essential element of the active site of the mature decarboxylase.

The protein localises to the cell membrane. It catalyses the reaction a 1,2-diacyl-sn-glycero-3-phospho-L-serine + H(+) = a 1,2-diacyl-sn-glycero-3-phosphoethanolamine + CO2. It participates in phospholipid metabolism; phosphatidylethanolamine biosynthesis; phosphatidylethanolamine from CDP-diacylglycerol: step 2/2. Its function is as follows. Catalyzes the formation of phosphatidylethanolamine (PtdEtn) from phosphatidylserine (PtdSer). This is Phosphatidylserine decarboxylase proenzyme from Dechloromonas aromatica (strain RCB).